The sequence spans 751 residues: MALTDSKKKATSKRKRDEPEQEQTHTLTSQLEMLTDEEGDDDNAGDVSDDGEYDEFPEIDAESDSEEEDEEEDEEDEEDEPDISDEEDSDSDESLHVFPKAKTVVSDITGQQKRVYPEIEPDYDSDSSTEDSPNRVGNVPMHWYDDLPHIGYDINGKRVLRPAKGDELDKFLATIEDPDSWTSAFDKKMQMDKPLTSEELDIIQRLYAGENPDATYDPYEPMVEWFTGKGKEEIMPLSAAPEPKRRWVRSKWEKQKIMKIVRAIRQGRIVPNKPKTSSKQFEFYSIWSSEPSSSQPPPLPAPKRPLPTNAESYNPPEEYLPTEEEKQEWLKQDPEDRERDFLPQKFSSLRHVPAYDQFIKERFNRQLDLYLAPRIQRVKLNIDPNSLIPKLPSPSSLKPFPNYRSLLFTHPKGRARCVSVSPDGAWAVSGDEDGVVSLWEVNVGCEIRRWKFEGKIGSLEWCPRADACYFAVGIEETIHFLIPPNLDPTVLALTQTLLAPSTLPPAPATPSAVKWSSSSLSSWSVEQPILSLNLPPSSGLPTQISWHKKGDYIATVSSGGAQNGVWIHQFTRRHSQAPFKKIKGAVQQVLFHPIKPHFFVATQQYVRLYNLAEQKLIKTLQPGIRWISSMDVHPSGDHVIVGGYDRKLCWFDLELSEKPYKVLRYHSRAIRSLHFHPTYPLFASSSDDGSIQIFHARVYNDLMTDPLIVPLKILRGHQITDGLGILQVKWTPKHPWLLSAAADGTVAVWCS.

Disordered stretches follow at residues 1–140 and 289–336; these read MALT…GNVP and SEPS…DPED. Acidic residues-rich tracts occupy residues 34–92 and 119–129; these read LTDE…SDSD and IEPDYDSDSST. Positions 294–305 are enriched in pro residues; sequence SQPPPLPAPKRP. A compositionally biased stretch (basic and acidic residues) spans 323-336; it reads EEEKQEWLKQDPED. WD repeat units follow at residues 410–449, 536–580, 582–621, 622–661, 665–704, and 720–751; these read HPKG…EIRR, PSSG…APFK, IKGA…KTLQ, PGIR…KPYK, YHSR…DLMT, and TDGL…VWCS.

The protein belongs to the WD repeat BOP1/ERB1 family. As to quaternary structure, component of the NOP7 complex, composed of ERB1, NOP7 and YTM1. The complex is held together by ERB1, which interacts with NOP7 via its N-terminal domain and with YTM1 via a high-affinity interaction between the seven-bladed beta-propeller domains of the 2 proteins. The NOP7 complex associates with the 66S pre-ribosome.

The protein localises to the nucleus. The protein resides in the nucleolus. It localises to the nucleoplasm. Component of the NOP7 complex, which is required for maturation of the 25S and 5.8S ribosomal RNAs and formation of the 60S ribosome. This Coprinopsis cinerea (strain Okayama-7 / 130 / ATCC MYA-4618 / FGSC 9003) (Inky cap fungus) protein is Ribosome biogenesis protein ERB1.